A 164-amino-acid polypeptide reads, in one-letter code: T-cell surface glycoprotein CD3 zeta chain (164 aa).

The first 21 residues, Met1–Ala21, serve as a signal peptide directing secretion. The residue at position 22 (Gln22) is a Blocked amino end (Gln). Topologically, residues Gln22–Lys30 are extracellular. The chain crosses the membrane as a helical span at residues Leu31–Leu51. The Cytoplasmic portion of the chain corresponds to Arg52–Arg164. Phosphoserine is present on Ser58. 3 ITAM domains span residues Thr61–Lys89, Gln100–Thr128, and Glu131–Gln159. Phosphotyrosine occurs at positions 72 and 83. Residues Glu87–Met96 show a composition bias toward basic and acidic residues. Positions Glu87–Tyr111 are disordered. Phosphotyrosine is present on residues Tyr111, Tyr123, Tyr142, and Tyr153. Residues Ser124–Gln143 are disordered.

The protein belongs to the CD3Z/FCER1G family. As to quaternary structure, the TCR-CD3 complex is composed of a CD3D/CD3E and a CD3G/CD3E heterodimers that preferentially associate with TCRalpha and TCRbeta, respectively, to form TCRalpha/CD3E/CD3G and TCRbeta/CD3G/CD3E trimers. In turn, the hexamer interacts with CD3Z homodimer to form the TCR-CD3 complex. Alternatively, TCRalpha and TCRbeta can be replaced by TCRgamma and TCRdelta. Interacts with SLA. Interacts with SLA2. Interacts with TRAT1. Interacts with DOCK2. Interacts with SHB. Interacts with ZAP70. Interacts (tyrosine phosphorylated) with SHC1 (via SH2 domain). Interacts with PTPRC. Interacts with CRK; this interaction regulates CD3Z phosphorylation. Interacts (on T cell side) with CD81, ICAM1 and CD9 at immunological synapses between antigen-presenting cells and T cells. Interacts with CD160. Interacts with LY6E. Interacts with LY6E. The signaling subunit of immunoglobulin gamma (IgG) Fc receptor complex. As a homodimer or a heterodimer with FCER1G, associates with the ligand binding subunit FCGR3A (via transmembrane domain); this interaction is a prerequisite for Fc receptor complex expression on the cell surface. Interacts with CD5. In terms of processing, phosphorylated on Tyr residues after T-cell receptor triggering by LCK in association with CD4/CD8. As to expression, CD3Z is expressed in normal lymphoid tissue and in peripheral blood mononuclear cells (PBMCs). Expressed also in retinal ganglion cells.

The protein localises to the cell membrane. Part of the TCR-CD3 complex present on T-lymphocyte cell surface that plays an essential role in adaptive immune response. When antigen presenting cells (APCs) activate T-cell receptor (TCR), TCR-mediated signals are transmitted across the cell membrane by the CD3 chains CD3D, CD3E, CD3G and CD3Z. All CD3 chains contain immunoreceptor tyrosine-based activation motifs (ITAMs) in their cytoplasmic domain. Upon TCR engagement, these motifs become phosphorylated by Src family protein tyrosine kinases LCK and FYN, resulting in the activation of downstream signaling pathways. CD3Z ITAMs phosphorylation creates multiple docking sites for the protein kinase ZAP70 leading to ZAP70 phosphorylation and its conversion into a catalytically active enzyme. Plays an important role in intrathymic T-cell differentiation. Additionally, participates in the activity-dependent synapse formation of retinal ganglion cells (RGCs) in both the retina and dorsal lateral geniculate nucleus (dLGN). The sequence is that of T-cell surface glycoprotein CD3 zeta chain (Cd247) from Mus musculus (Mouse).